A 60-amino-acid chain; its full sequence is uncharacterized protein (60 aa).

Residues 27–49 (YYWLVSTARMVLGVTILILILIG) traverse the membrane as a helical segment.

The protein localises to the membrane. This is an uncharacterized protein from Archaeoglobus fulgidus (strain ATCC 49558 / DSM 4304 / JCM 9628 / NBRC 100126 / VC-16).